Reading from the N-terminus, the 582-residue chain is MKGSIPRTFIDDLLAKTDIVELVNSRVKLKKAGRDYQACCPFHHEKTPSFTVSQKKQFYHCFGCGAHGNAISFLMEYDKLEFVEAIEELAGMLGLEIPRENKPHFHGKQINLQTKRNLYELMQEIAQFYQQQLAQHIPAQSYLQQRGLSPEVISRFQIGFVPNSFDAVLQRFGQQKEDQQKLFDLGMLSRSEQGKIYDRFRHRIMFPIRDRRGKTIAFGGRVLGDEKPKYLNSPESATYHKGNELYGLYEALQANESPEMLLVVEGYMDVVALAQFGVDYAVASLGTATTAEQIQLLFRSTEQAICCYDGDRAGREAAWRAFENALPYLEDGRQLKFVFLPDGEDPDSFIRQHGKASFEQYMQKALSLSEFLFTSLAPQVDFSSKEGKTKLAALAVPLIKKIPGDMLRLSLRNTLAQKLGILDQAQLESLIPSYSEMKITASPQPVKRTPMRVLIGLLLQNPELAQLVPDLSPLRTLNEPGLDLLEKLTALCQEKVGITTGQILEYWRDTEHSKALEILASWNHLVEDTQIEETFKSTLRYLYFQLIEHEIDLLIAKDRSEGLNMNERKKLTQLLVKKQQKA.

Residues 40–64 form a CHC2-type zinc finger; sequence CPFHHEKTPSFTVSQKKQFYHCFGC. Residues 259–341 enclose the Toprim domain; it reads EMLLVVEGYM…GRQLKFVFLP (83 aa). Mg(2+) contacts are provided by Glu-265, Asp-309, and Asp-311.

It belongs to the DnaG primase family. In terms of assembly, monomer. Interacts with DnaB. Requires Zn(2+) as cofactor. Mg(2+) is required as a cofactor.

The enzyme catalyses ssDNA + n NTP = ssDNA/pppN(pN)n-1 hybrid + (n-1) diphosphate.. Its function is as follows. RNA polymerase that catalyzes the synthesis of short RNA molecules used as primers for DNA polymerase during DNA replication. The protein is DNA primase of Pasteurella multocida (strain Pm70).